Reading from the N-terminus, the 153-residue chain is Ribosomal RNA large subunit methyltransferase H (153 aa).

S-adenosyl-L-methionine is bound by residues leucine 70, glycine 102, and 121–126; that span reads LSAMTF.

This sequence belongs to the RNA methyltransferase RlmH family. As to quaternary structure, homodimer.

Its subcellular location is the cytoplasm. It carries out the reaction pseudouridine(1915) in 23S rRNA + S-adenosyl-L-methionine = N(3)-methylpseudouridine(1915) in 23S rRNA + S-adenosyl-L-homocysteine + H(+). Its function is as follows. Specifically methylates the pseudouridine at position 1915 (m3Psi1915) in 23S rRNA. The chain is Ribosomal RNA large subunit methyltransferase H from Trichlorobacter lovleyi (strain ATCC BAA-1151 / DSM 17278 / SZ) (Geobacter lovleyi).